The primary structure comprises 316 residues: Serpentine receptor class delta-45 (316 aa).

7 helical membrane-spanning segments follow: residues 8-28 (VFYP…IFII), 42-62 (ILLV…LIQI), 91-111 (YFLT…TIYL), 128-148 (VTFF…SLIL), 184-204 (IIIT…GLLL), 234-254 (LQVF…LVLA), and 266-286 (FFSV…LYSV).

It belongs to the nematode receptor-like protein srd family.

The protein localises to the membrane. The chain is Serpentine receptor class delta-45 (srd-45) from Caenorhabditis elegans.